Reading from the N-terminus, the 1620-residue chain is MSETQEQEASGNGEPDLPTTIRVTLKTLDDREATVTIGLQDTIQSLIDLGRREMNIQSGFQRVIAGGRVLNSTQTVQAAGISDGQTVHLVDRGPSGENDRPNVMPDRVAGPRIINAIPGLPPPGFIFQSPAFARMIPGNVEIPTPPSQTQHTVVHPIRVPGSIAGTPVLTSRVSEDCVLQKAVPYRGTSNSPNRPQAASQTVTFPSEPNVIQWTVNIADDLIFRPREHFEQVVRETINNISFLSDSTRLGVSMKWNQNCTSLSVELPPVSPHIPSPALEKLDFLCLWTDHLSRFIDKLEEHDGLVAATRHVLEMVKTRQFDQNLSQQARNQRVEALDEIVKHLEYQWAELSHMKDFERIRFRKNQTEEYRALKIQEYPETPRNPHFYMRHALDIDVIGVMREFRKQQRRFTRLEDLLDDLNEVGAVKFIRDHITTEVDYRYQALSMFYCYIQRMRHQISHMTHLTADLDVSFITPSFPQRILPQYAFQSSDEQPLTIPVTHIFEPPRMLSDVGGRYNGDYPYLAYHPPSVHMEVVLQEPRRIAEPRPQILARPTPQQFVLTQEMNQGGSINLMAATDPISGLSLQDVLRAQQEQVENLFAQQPGIEGGRVRVTARPGRRFVATTGDAPSVPVETLPPPGSDQQPGTSRRFTTHRFNVQPDARGAETETLAPFPVAIEPNELQRIAKNIASRYRAEALQRIASSLTTRFNNESWDTRIQNMPLCTLRECVAIALEMLTSAGNTVNESKDLMLALVRDEEVLVRAIAECIKSLFGRGEFPTHVARLIMPTNQTASSRNDYESVDGVEESQSDEFDSMIVRVPSDISQPQSGDLRAIRERRQNRRQFLENRGRIPSTSSAPSTSENPPGPSFNSEDAADIRAGRLPLGTRPNRRTVRETVHPAAAARAESPNHISLTFTATTHTFAPAGFPLMMASSNVPSTSAGPPGWPIRQVVSPTPTTRGLFEFDLSGSSDQPARSTPSPPAPTPRTTSAPATVQSSPTRQESMDIDSPNVQNPGHVESPAAIAARQAARVARARIDHLAATFNGDLADSRRQSPFVTPGPTTPLNDPRRRTVRVTQHVKPMVAIDPFMNCTNRHCEINRLATPTHMADGDRFTLQSLQPDQEFEARIQALVPSIERRPIQIHHEDEDYNYSIRRTQSGLLSFRNLEDFRPFVKTAIRSLLAHCIDADTLFTMNMNNISGYQAANHTELLRMVKEHISRVPGSRATRNASQNTTSVNQSTETSPREQMNRSPVQEAADPRLAFSPFPPGINLEQEVLIPGQIASLLTYLVDYMESSSNPRPPGIFGFLLELTYGRLTRHDFAQLARRTTATNVASEFEAQIRAHIRDNYLVGRTGLSNSELHGIAENLANNEQFFAIFMSQNDQLPTSFPFGYDRNDFAEVVWAFRQIEIALIKSFLTLSQLNLDSGNAVRFILQSVDSYLYRNLIMFYRMCDRDVERMKIQMKRISDYFATIRYESTDRPGINVFIDNWNRVMDYWSNRYTDFSEENFDQFLLKVRAGTDWNDIVLNESRQLLPTIASTSSQPSTSSSSLNTVSTNNPRKRNHDGSREDNDDCVDVVAPMMTSLSTSSPLTSQSSSSGTRTSSGSSGPSTSSTTTNNIQ.

The Ubiquitin-like domain occupies 21-96; it reads IRVTLKTLDD…VHLVDRGPSG (76 aa). Disordered stretches follow at residues 621–648, 791–810, 842–874, 950–1016, 1219–1260, and 1537–1620; these read VATT…GTSR, TASS…SQSD, RQFL…SEDA, QVVS…NPGH, RVPG…ADPR, and IAST…NNIQ. The segment covering 799 to 810 has biased composition (acidic residues); that stretch reads ESVDGVEESQSD. A compositionally biased stretch (polar residues) spans 852–871; sequence PSTSSAPSTSENPPGPSFNS. A compositionally biased stretch (polar residues) spans 1225–1242; it reads ATRNASQNTTSVNQSTET. 2 stretches are compositionally biased toward low complexity: residues 1537–1556 and 1583–1620; these read IAST…TVST and TSLS…NNIQ.

This is an uncharacterized protein from Caenorhabditis elegans.